Here is a 2339-residue protein sequence, read N- to C-terminus: Voltage-dependent N-type calcium channel subunit alpha-1B (2339 aa).

The segment at 1–37 (MVRFGDELGGRYGGPGGGERARGGGAGGAGGPGPGGL) is disordered. Residues 1 to 90 (MVRFGDELGG…DNVVRKYAKR (90 aa)) are Cytoplasmic-facing. The segment covering 10 to 37 (GRYGGPGGGERARGGGAGGAGGPGPGGL) has biased composition (gly residues). An Omega-N-methylarginine modification is found at arginine 22. One copy of the I repeat lies at 82–359 (NVVRKYAKRI…LVLGVLSGEF (278 aa)). A helical transmembrane segment spans residues 91 to 114 (ITEWPPFEYMILATIIANCIVLAL). Residues 115–131 (EQHLPDGDKTPMSERLD) lie on the Extracellular side of the membrane. The chain crosses the membrane as a helical span at residues 132-152 (DTEPYFIGIFCFEAGIKIIAL). Residues 153–163 (GFVFHKGSYLR) lie on the Cytoplasmic side of the membrane. The helical transmembrane segment at 164 to 182 (NGWNVMDFVVVLTGILATA) threads the bilayer. Over 183–187 (GTDFD) the chain is Extracellular. The helical transmembrane segment at 188–211 (LRTLRAVRVLRPLKLVSGIPSLQV) threads the bilayer. Over 212–221 (VLKSIMKAMV) the chain is Cytoplasmic. Residues 222–244 (PLLQIGLLLFFAILMFAIIGLEF) traverse the membrane as a helical segment. The Extracellular segment spans residues 245-331 (YMGKFHKACF…NTNDAAGNTW (87 aa)). Asparagine 256 is a glycosylation site (N-linked (GlcNAc...) asparagine). A helical transmembrane segment spans residues 332-356 (NWLYFIPLIIIGSFFMLNLVLGVLS). Residues 357 to 482 (GEFAKERERV…FFIRRMVKAQ (126 aa)) are Cytoplasmic-facing. A binding to the beta subunit region spans residues 379–396 (QQIERELNGYLEWIFKAE). The residue at position 411 (serine 411) is a Phosphoserine. 451–458 (ASLKSGKT) lines the ATP pocket. An II repeat occupies 468-712 (EKMFRFFIRR…VFLAIAVDNL (245 aa)). Residues 483–501 (SFYWVVLCVVALNTLCVAM) form a helical membrane-spanning segment. Over 502-511 (VHYNQPRRLT) the chain is Extracellular. The helical transmembrane segment at 512–534 (TTLYFAEFVFLGLFLTEMSLKMY) threads the bilayer. At 535-544 (GLGPRSYFRS) the chain is on the cytoplasmic side. A 1,2-diacyl-sn-glycero-3-phospho-(1D-myo-inositol-4,5-bisphosphate) is bound at residue serine 544. The helical transmembrane segment at 545–566 (SFNCFDFGVIVGSVFEVVWAAI) threads the bilayer. Residues 567 to 573 (KPGSSFG) lie on the Extracellular side of the membrane. The chain crosses the membrane as a helical span at residues 574-586 (ISVLRALRLLRIF). Residues arginine 584 and lysine 587 each coordinate a 1,2-diacyl-sn-glycero-3-phospho-(1D-myo-inositol-4,5-bisphosphate). Residues 587–604 (KVTKYWSSLRNLVVSLLN) are Cytoplasmic-facing. The helical transmembrane segment at 605–630 (SMKSIISLLFLLFLFIVVFALLGMQL) threads the bilayer. Topologically, residues 631–682 (FGGQFNFQDETPTTNFDTFPAAILTVFQILTGEDWNAVMYHGIESQGGVSKG) are extracellular. The chain crosses the membrane as a helical span at residues 683–709 (MFSSFYFIVLTLFGNYTLLNVFLAIAV). The Cytoplasmic portion of the chain corresponds to 710–1151 (DNLANAQELT…FCHYIVTMRY (442 aa)). Phosphoserine occurs at positions 745, 748, and 783. Basic and acidic residues-rich tracts occupy residues 816-826 (PLVVELGRDGA), 857-886 (KDKT…EERP), 922-932 (GSPEEAAEREP), and 965-976 (GPREAESGEEPA). Disordered regions lie at residues 816–1038 (PLVV…VTVG) and 1054–1076 (QPED…DPNT). The span at 977–986 (RRHRARHKAQ) shows a compositional bias: basic residues. A compositionally biased stretch (basic and acidic residues) spans 990–1029 (EAVEKETTEKEATEKEAEIVEADKEKELRNHQPREPHCDL). Phosphoserine is present on serine 1069. The III repeat unit spans residues 1137–1419 (NLLRRFCHYI…IFVALIIITF (283 aa)). A helical membrane pass occupies residues 1152-1170 (FEVVILVVIALSSIALAAE). At 1171 to 1178 (DPVRTDSP) the chain is on the extracellular side. The chain crosses the membrane as a helical span at residues 1179 to 1203 (RNNALKYLDYIFTGVFTFEMVIKMI). Topologically, residues 1204 to 1217 (DLGLLLHPGAYFRD) are cytoplasmic. Residues 1218 to 1238 (LWNILDFIVVSGALVAFAFSG) traverse the membrane as a helical segment. Topologically, residues 1239–1244 (SKGKDI) are extracellular. Residues 1245–1265 (NTIKSLRVLRVLRPLKTIKRL) traverse the membrane as a helical segment. The Cytoplasmic segment spans residues 1266-1283 (PKLKAVFDCVVNSLKNVL). A helical membrane pass occupies residues 1284–1303 (NILIVYMLFMFIFAVIAVQL). The Extracellular portion of the chain corresponds to 1304-1390 (FKGKFFYCTD…EQGPSPGYRM (87 aa)). Residues 1391-1416 (ELSIFYVVYFVVFPFFFVNIFVALII) traverse the membrane as a helical segment. At 1417–1471 (ITFQEQGDKVMSECSLEKNERACIDFAISAKPLTRYMPQNRQSFQYKTWTFVVSP) the chain is on the cytoplasmic side. The stretch at 1456–1711 (NRQSFQYKTW…LFVAVIMDNF (256 aa)) is one IV repeat. The chain crosses the membrane as a helical span at residues 1472–1490 (PFEYFIMAMIALNTVVLMM). Over 1491–1498 (KFYDAPYE) the chain is Extracellular. A helical membrane pass occupies residues 1499–1523 (YELMLKCLNIVFTSMFSMECVLKII). Residues 1524–1533 (AFGVLNYFRD) are Cytoplasmic-facing. Residues 1534–1555 (AWNVFDFVTVLGSITDILVTEI) form a helical membrane-spanning segment. Residues 1556 to 1563 (AETNNFIN) lie on the Extracellular side of the membrane. The N-linked (GlcNAc...) asparagine glycan is linked to asparagine 1563. The helical transmembrane segment at 1564–1582 (LSFLRLFRAARLIKLLRQG) threads the bilayer. Topologically, residues 1583-1601 (YTIRILLWTFVQSFKALPY) are cytoplasmic. Residues 1602-1621 (VCLLIAMLFFIYAIIGMQVF) form a helical membrane-spanning segment. At 1622-1683 (GNIALDDDTS…ANATECGSDF (62 aa)) the chain is on the extracellular side. Residue asparagine 1675 is glycosylated (N-linked (GlcNAc...) asparagine). A helical transmembrane segment spans residues 1684 to 1707 (AYFYFVSFIFLCSFLMLNLFVAVI). Residues 1708–2339 (MDNFEYLTRD…YHHPDQDHWC (632 aa)) lie on the Cytoplasmic side of the membrane. An EF-hand domain is found at 1724–1759 (HHLDEFIRVWAEYDPAACGRISYNDMFEMLKHMSPP). Positions 1737, 1743, and 1748 each coordinate Ca(2+). Polar residues predominate over residues 1916-1931 (SSTSLSNGGAIQNQES). 2 disordered regions span residues 1916–1968 (SSTS…VGRS) and 1981–2206 (TRRG…YKTA). Basic and acidic residues predominate over residues 1946-1960 (DAPHEARPPLERGHS). The segment covering 2049–2063 (SHHHHHRCHRRRDRK) has biased composition (basic residues). Serine 2066 carries the phosphoserine modification. The span at 2098–2116 (CRRERERRQERGRSQERRQ) shows a compositional bias: basic and acidic residues. Residues 2143–2153 (PSLSSHPTSPT) are compositionally biased toward low complexity. Residues 2164-2180 (GSGSVNGSPLLSTSGAS) are compositionally biased toward polar residues. A phosphoserine mark is found at serine 2224, serine 2233, and serine 2256.

Belongs to the calcium channel alpha-1 subunit (TC 1.A.1.11) family. CACNA1B subfamily. Multisubunit complex consisting of alpha-1, alpha-2, beta and delta subunits in a 1:1:1:1 ratio. The channel activity is directed by the pore-forming and voltage-sensitive alpha-1 subunit. In many cases, this subunit is sufficient to generate voltage-sensitive calcium channel activity. The auxiliary subunits beta and alpha-2/delta linked by a disulfide bridge regulate the channel activity. Interacts with RIMS1. Interacts with FMR1 (via C-terminus); this interaction induces a decrease in the number of presynaptic functional CACNA1B channels at the cell surface. Phosphorylated in vitro by CaM-kinase II, PKA, PKC and CGPK. As to expression, isoform Alpha-1b-1 and isoform Alpha-1b-2 are expressed in the central nervous system, but not in skeletal muscle or aorta. Expressed in the cerebral white matter, cortex, hippocampus, basal ganglia, and cerebellum.

It localises to the membrane. It carries out the reaction Ca(2+)(in) = Ca(2+)(out). Is specifically blocked by omega-conotoxin GVIA. Is specifically blocked by omega-conotoxin MVIIA (ziconotide). Is insensitive to dihydropyridines (DHP). Its activity is regulated as follows. Is specifically blocked by omega-conotoxin MVIIA (ziconotide). Is insensitive to dihydropyridines (DHP). Functionally, voltage-sensitive calcium channels (VSCC) mediate the entry of calcium ions into excitable cells and are also involved in a variety of calcium-dependent processes, including muscle contraction, hormone or neurotransmitter release, gene expression, cell motility, cell division and cell death. This alpha-1B subunit gives rise to N-type calcium currents. N-type calcium channels belong to the 'high-voltage activated' (HVA) group. They are involved in pain signaling. Calcium channels containing alpha-1B subunit may play a role in directed migration of immature neurons. Mediates Ca(2+) release probability at hippocampal neuronal soma and synaptic terminals. Voltage-sensitive calcium channels (VSCC) mediate the entry of calcium ions into excitable cells and are also involved in a variety of calcium-dependent processes, including muscle contraction, hormone or neurotransmitter release, gene expression, cell motility, cell division and cell death. This alpha-1B subunit gives rise to N-type calcium currents. The sequence is that of Voltage-dependent N-type calcium channel subunit alpha-1B (CACNA1B) from Homo sapiens (Human).